The sequence spans 860 residues: Leucine--tRNA ligase (860 aa).

Residues 42–52 (PYPSGRLHMGH) carry the 'HIGH' region motif. The 'KMSKS' region motif lies at 619–623 (KMSKS). Residue Lys622 participates in ATP binding.

It belongs to the class-I aminoacyl-tRNA synthetase family.

The protein localises to the cytoplasm. The enzyme catalyses tRNA(Leu) + L-leucine + ATP = L-leucyl-tRNA(Leu) + AMP + diphosphate. This Photorhabdus laumondii subsp. laumondii (strain DSM 15139 / CIP 105565 / TT01) (Photorhabdus luminescens subsp. laumondii) protein is Leucine--tRNA ligase.